Reading from the N-terminus, the 81-residue chain is Defensin-like protein 266 (81 aa).

Positions 1-26 (MEKIVFRKIVFVAFLLSLSCLLEGEA) are cleaved as a signal peptide. Disulfide bonds link Cys40-Cys58, Cys46-Cys63, and Cys50-Cys65.

It belongs to the DEFL family.

Its subcellular location is the secreted. The polypeptide is Defensin-like protein 266 (Arabidopsis thaliana (Mouse-ear cress)).